Consider the following 304-residue polypeptide: Coenzyme PQQ synthesis protein B (304 aa).

This sequence belongs to the PqqB family.

Its pathway is cofactor biosynthesis; pyrroloquinoline quinone biosynthesis. Functionally, may be involved in the transport of PQQ or its precursor to the periplasm. In Pseudomonas aeruginosa (strain LESB58), this protein is Coenzyme PQQ synthesis protein B.